The following is a 338-amino-acid chain: Nucleoid-associated protein HI_0839 (338 aa).

The protein belongs to the YejK family.

It is found in the cytoplasm. It localises to the nucleoid. In Haemophilus influenzae (strain ATCC 51907 / DSM 11121 / KW20 / Rd), this protein is Nucleoid-associated protein HI_0839.